We begin with the raw amino-acid sequence, 124 residues long: MLNTLVVFVGAGLGGALRHGVNLAAARLGGSFPAGTMIINIAGSLAMGLLTGWFAVRGGMPQAWRLFLTTGILGGFTTFSTFSLEAFLLMERGAFAAAALYVLGSVAAGIAGVGASLAVIRQFG.

Helical transmembrane passes span L5 to A25, T36 to V56, T70 to M90, and L100 to I120. Residues G74 and T77 each contribute to the Na(+) site.

It belongs to the fluoride channel Fluc/FEX (TC 1.A.43) family.

It localises to the cell inner membrane. It carries out the reaction fluoride(in) = fluoride(out). Na(+) is not transported, but it plays an essential structural role and its presence is essential for fluoride channel function. Functionally, fluoride-specific ion channel. Important for reducing fluoride concentration in the cell, thus reducing its toxicity. This Methylobacterium nodulans (strain LMG 21967 / CNCM I-2342 / ORS 2060) protein is Fluoride-specific ion channel FluC.